The following is a 192-amino-acid chain: Transcriptional activator GvpE (192 aa).

140-145 (KRKVYR) is a binding site for DNA. Residues 150 to 181 (EATFDTVEPAVNRLVTFSLVLKALMIDCNARY) are leucine-zipper.

In terms of assembly, interacts with GvpD, also with c-GvpD from H.salinarum.

The protein resides in the cytoplasm. With respect to regulation, the amount of protein that accumulates is controlled by GvpD; GvpD causes a reduction in the amount of GvpE, preventing accumulation of excessive amounts of gas vesicles. Plays a regulatory role in gas vesicle synthesis, activates transcription of the gvpA operon, and probably of the gvpD operon. Gas vesicles are hollow, gas filled proteinaceous nanostructures found in some microorganisms. They allow positioning of halobacteria at the optimal depth for growth in the poorly aerated, shallow brine pools of their habitat. Its function is as follows. Expression of a 9.5 kb mc-vac DNA fragment containing 2 divergently transcribed regions (gvpD-gvpE-gvpF-gvpG-gvpH-gvpI-gvpJ-gvpK-gvpL-gvpM and gvpA-gvpC-gvpN-gvpO) allows H.volcanii to produce gas vesicles. The sequence is that of Transcriptional activator GvpE from Haloferax mediterranei (strain ATCC 33500 / DSM 1411 / JCM 8866 / NBRC 14739 / NCIMB 2177 / R-4) (Halobacterium mediterranei).